Reading from the N-terminus, the 278-residue chain is Protein mtd-1 (278 aa).

An N-terminal signal peptide occupies residues 1-17 (MRSSLLLLVFFLSIGWA). Residues 18–254 (RYCVHNEKSW…EMLEEIEARK (237 aa)) are Extracellular-facing. Asparagine 40, asparagine 73, asparagine 163, and asparagine 190 each carry an N-linked (GlcNAc...) asparagine glycan. A helical membrane pass occupies residues 255-271 (VPVDSSAPVNIILSIAF). At 272-278 (SIFLIHF) the chain is on the cytoplasmic side.

The protein resides in the cell membrane. Functionally, plays a role in mechanosensory transduction (touch sensitivity). The sequence is that of Protein mtd-1 from Caenorhabditis elegans.